Reading from the N-terminus, the 248-residue chain is Protein FAM133A (248 aa).

Residues 68 to 80 are compositionally biased toward basic and acidic residues; it reads NWKKELEKSREKL. The interval 68-248 is disordered; sequence NWKKELEKSR…KKSGSSHKSR (181 aa). Positions 90–102 are enriched in basic residues; sequence KRERKKKRKKKSC. A compositionally biased stretch (low complexity) spans 103-118; it reads RSSSSSSSSDSSSSSS. Basic residues predominate over residues 127 to 138; sequence QGKRRKKKKNRS. Basic and acidic residues-rich tracts occupy residues 147–156, 163–175, and 211–220; these read HESESESKES, SKDE…DVRS, and RCEEREQAKE. The span at 221-248 shows a compositional bias: basic residues; the sequence is KVKKKKKKQHKKHSKKKKKKSGSSHKSR.

It belongs to the FAM133 family.

This is Protein FAM133A (FAM133A) from Homo sapiens (Human).